A 126-amino-acid chain; its full sequence is Small ribosomal subunit protein bS6 (126 aa).

A disordered region spans residues 103–126 (LKAKDERKAPEALVEEVEAEDADE). Residues 115-126 (LVEEVEAEDADE) show a composition bias toward acidic residues.

Belongs to the bacterial ribosomal protein bS6 family.

Binds together with bS18 to 16S ribosomal RNA. This Glaesserella parasuis serovar 5 (strain SH0165) (Haemophilus parasuis) protein is Small ribosomal subunit protein bS6.